A 1546-amino-acid polypeptide reads, in one-letter code: MAPTPLPLEQMSGVGGYLPAGQEGGPRINTMSMSMLIDFIIQRTYHELTVLAELLPRKTDMERKIEIYNYAARTRHLFTRLNALVKWGNSVSKVDKSSQIMSFLDKQNMLFVETADMLARMSRETLVRARLPNFHIPAAVEVLTTGTYNRLPTCIRERIVPADAITPAEKKQTLLRLNQVIQHRLVTGKLLPQMREFRIKNGRVTFEVKHEFSVALTVMGDSQNVPWRLLDIDVLVEDKETGDGKSLVHPLQVNYIHQLIQARLVENPNALSEVYNCLHYFCQSLQLEVLYTQTLRLNYERLDDNNITVEEYVPGVKLTVSYWRDLKSELGYRLTVQSDPSEIGRPLAVVHVPSLGAKESAEVADRAVRSEHLSMERLIVHTVYIRSVSRLSDLKLEFQAFLKDVDFNLQGTPAILTVPVLSPCLRAEQIHITIDTHTGMFRCHVPKHLDCPITDEMQEALNGDRSKLPSLLSELRYWITHRRCEKTLQHLPATATDTLTFLTQPEQELLQQGRHKIYVKLHRHPNIILVVQLKEKSTMANEMEYTFHLGFVAFQKDEADVIDDSAKQLVSVVAQPPSDIPKFFTKLMRLIEFDTFVATHGPGTEVDAEVSPHKRKSTGDILAPPAKQQKTIFPAYFIPELAHVVAMCDEKIPFMNLAQTLSKHNIPHSGLQVEANATSLVLKILALPQPGKSATAAGQQPQQGAASAAGTAPPSGSSAFPRIEPHVWDDLMRRVLSISVRSQTNKNSQVRIWVVEFVFYSTPLQSCHPKEQGSRRTVYLTYEQANHDFSKTVEELLNDWSKIVYLYTLVYDFAEQLRNKRLALCDMLVVKSYSYMNLLLGYGPKKEVSCNIYWSVQSHGFRLTFVGGMSAVNAHSMMRDQLAQHLNQQHSLTQIAQILHETYNPMSSIAKLPVLPFLGIPRPQVPVLSFCMLAQSPCLMRLTYQAVYCLELRFRANRLVSIRDGASSRFERNVIEEFTPIQGLKAFLSKYVDESAAYRGRAPHEDDNPLSPIGMEDNYGGPSSVTGVSAGGSSPFLGAGMRGPQSPRDSGLRFPAPHTPPSSSNPHTPASPHPSAGGGGAAQSHGNFNLTSPPAPHMPHPSPGGLMPSSPLNPQPSPHMVHSPGPNTLYMQSHQDSPFTAMSPANNQWPGSPSMPRPSPRPGQSPEHKSTGGSVVTGGPDRGGSRGTLNRPWAGAVPTLLTHEALETLCRPSPHPNKDINVTDMSPLERFLGCVYMRRQLHRNIQNEESLTALNSTEPGVVLFKVDGLQCQVMLNQMHMQTLHLKITQLPPPPDKPTFQLSPDDLLVIEQYFDTRVAAPPYRPNSLHSICRLLNLPAQVLKDFVQIMRLELKPEFGGDQLKWTVQMCMRMPPSAVPIVPSGNACVVLGRMKILFFLQITKIPFNGKDWKDSPSLVLPIVYDITMNLTQMAERREQVPSPMMTAASTLLRRFSEFNSQQNQCSLFPAITDLLTNLQLATDMPQPPPNQAIGPPVGVGVGVGVGIGVVGSSPNPMMPMQQLQPQVGPQGQVGPGGYPQLGPNPGGPQ.

2 consecutive short sequence motifs (LXXLL motif) follow at residues 51–55 (LAELL) and 468–472 (LPSLL). Disordered stretches follow at residues 692-717 (KSATAAGQQPQQGAASAAGTAPPSGS), 1000-1193 (GRAP…NRPW), and 1512-1546 (NPMMPMQQLQPQVGPQGQVGPGGYPQLGPNPGGPQ). Low complexity-rich tracts occupy residues 693-717 (SATAAGQQPQQGAASAAGTAPPSGS), 1020-1035 (GGPSSVTGVSAGGSSP), and 1061-1075 (PSSSNPHTPASPHPS). Residues 1093 to 1102 (PPAPHMPHPS) show a composition bias toward pro residues. Residues 1125–1149 (GPNTLYMQSHQDSPFTAMSPANNQW) show a composition bias toward polar residues. A compositionally biased stretch (pro residues) spans 1153 to 1163 (PSMPRPSPRPG). Residues 1515 to 1527 (MPMQQLQPQVGPQ) are compositionally biased toward low complexity.

The protein belongs to the Mediator complex subunit 14 family. As to quaternary structure, component of the Mediator complex.

The protein resides in the nucleus. Functionally, component of the Mediator complex, a coactivator involved in the regulated transcription of nearly all RNA polymerase II-dependent genes. Mediator functions as a bridge to convey information from gene-specific regulatory proteins to the basal RNA polymerase II transcription machinery. Mediator is recruited to promoters by direct interactions with regulatory proteins and serves as a scaffold for the assembly of a functional preinitiation complex with RNA polymerase II and the general transcription factors. This is Mediator of RNA polymerase II transcription subunit 14 (MED14) from Drosophila pseudoobscura pseudoobscura (Fruit fly).